Reading from the N-terminus, the 232-residue chain is Phosphatidylserine decarboxylase proenzyme (232 aa).

Residue S190 is the Schiff-base intermediate with substrate; via pyruvic acid of the active site. A Pyruvic acid (Ser); by autocatalysis modification is found at S190.

The protein belongs to the phosphatidylserine decarboxylase family. PSD-A subfamily. Heterodimer of a large membrane-associated beta subunit and a small pyruvoyl-containing alpha subunit. Pyruvate is required as a cofactor. In terms of processing, is synthesized initially as an inactive proenzyme. Formation of the active enzyme involves a self-maturation process in which the active site pyruvoyl group is generated from an internal serine residue via an autocatalytic post-translational modification. Two non-identical subunits are generated from the proenzyme in this reaction, and the pyruvate is formed at the N-terminus of the alpha chain, which is derived from the carboxyl end of the proenzyme. The post-translation cleavage follows an unusual pathway, termed non-hydrolytic serinolysis, in which the side chain hydroxyl group of the serine supplies its oxygen atom to form the C-terminus of the beta chain, while the remainder of the serine residue undergoes an oxidative deamination to produce ammonia and the pyruvoyl prosthetic group on the alpha chain.

The protein resides in the cell membrane. It carries out the reaction a 1,2-diacyl-sn-glycero-3-phospho-L-serine + H(+) = a 1,2-diacyl-sn-glycero-3-phosphoethanolamine + CO2. It participates in phospholipid metabolism; phosphatidylethanolamine biosynthesis; phosphatidylethanolamine from CDP-diacylglycerol: step 2/2. Catalyzes the formation of phosphatidylethanolamine (PtdEtn) from phosphatidylserine (PtdSer). In Sinorhizobium medicae (strain WSM419) (Ensifer medicae), this protein is Phosphatidylserine decarboxylase proenzyme.